A 394-amino-acid chain; its full sequence is Putative FNIP repeat-containing protein R636 (394 aa).

FNIP repeat units lie at residues 126–167, 168–207, and 210–250; these read FNKS…FSVY, FDQPVVGYLPTRLTHLIFGTDFNQPIKGALPDTLEYLYFG, and FNQP…IFEA.

The chain is Putative FNIP repeat-containing protein R636 from Acanthamoeba polyphaga mimivirus (APMV).